The chain runs to 581 residues: Tail sheath protein (581 aa).

This sequence belongs to the myoviridae tail sheath protein family. As to quaternary structure, homomultimer.

The protein localises to the virion. The protein resides in the host cytoplasm. Its function is as follows. Polymerizes as an extended structure around the baseplate-tail tube complex. During ejection, the sheath shifts to a contracted form, thereby making the inner tail tube protrude through the host cell envelope. The sequence is that of Tail sheath protein from Mycobacterium phage Bxz1 (Mycobacteriophage Bxz1).